The primary structure comprises 267 residues: Outer membrane protein assembly factor BamD (267 aa).

The first 16 residues, 1–16, serve as a signal peptide directing secretion; the sequence is MKKILLTVSLGLALSA. Cys-17 carries N-palmitoyl cysteine lipidation. Cys-17 carries the S-diacylglycerol cysteine lipid modification.

Belongs to the BamD family. As to quaternary structure, part of the Bam complex.

It is found in the cell outer membrane. In terms of biological role, part of the outer membrane protein assembly complex, which is involved in assembly and insertion of beta-barrel proteins into the outer membrane. Required for efficient transformation of Neisseria meningitidis by species-related DNA. The protein is Outer membrane protein assembly factor BamD of Neisseria meningitidis serogroup A / serotype 4A (strain DSM 15465 / Z2491).